The chain runs to 199 residues: Photosystem II D1 precursor processing protein PSB27-H2, chloroplastic (199 aa).

The protein belongs to the Psb27 family. Interacts with the C-terminus of both the precursor and mature form of D1.

The protein localises to the plastid. It is found in the chloroplast thylakoid lumen. Required, but not essential, for D1 (psbA) precursor processing and thus correct photosystem II assembly (PSII). This is Photosystem II D1 precursor processing protein PSB27-H2, chloroplastic (PSB27-2) from Arabidopsis thaliana (Mouse-ear cress).